A 538-amino-acid polypeptide reads, in one-letter code: Fructooligosaccharide ABC transporter substrate-binding protein FusA (538 aa).

Positions 1–22 (MKFKTFSKSAVLLTASLAVLAA) are cleaved as a signal peptide. The N-palmitoyl cysteine moiety is linked to residue Cys23. Cys23 is lipidated: S-diacylglycerol cysteine. Glu167 lines the substrate pocket. Ca(2+) is bound by residues Asp215, Asn217, Asn219, Glu221, Asp223, and Glu224. Asn235 provides a ligand contact to substrate. Asp263, Phe264, Asp267, and Asn268 together coordinate Ca(2+). Residues Trp314, Asn318, Lys353, Trp384, Arg419, and Glu423 each coordinate substrate.

The protein belongs to the bacterial solute-binding protein 1 family. As to quaternary structure, the complex is composed of two ATP-binding proteins (MsmK), two transmembrane proteins (FusB and FusC) and a solute-binding protein (FusA).

Its subcellular location is the cell membrane. Functionally, part of the ABC transporter complex FusABC-MsmK involved in short- and long-chain fructooligosaccharide (FOS) import. Required for the utilization of long-chain FOSs. Binds kestose, nystose, fructofuranosyl-nystose and inulin, but not sucrose. Has a preference for long-chain FOSs (tetrasaccharides and larger). This chain is Fructooligosaccharide ABC transporter substrate-binding protein FusA, found in Streptococcus pneumoniae serotype 4 (strain ATCC BAA-334 / TIGR4).